A 160-amino-acid polypeptide reads, in one-letter code: UPF0225 protein CGSHiEE_01665 (160 aa).

It belongs to the UPF0225 family.

The chain is UPF0225 protein CGSHiEE_01665 from Haemophilus influenzae (strain PittEE).